The primary structure comprises 243 residues: Outer membrane protein A (243 aa).

Transmembrane regions (beta stranded) follow at residues 1 to 8 (LTAKLGYP), 13 to 21 (LDIYTRLGG), 47 to 56 (PVFAGGLEWA), 61 to 68 (IATRLEYQ), and 87 to 95 (LLSVGVSYR). A run of 4 repeats spans residues 107–108 (AP), 109–110 (AP), 111–112 (AP), and 113–114 (AP). The segment at 107–114 (APAPAPAP) is 4 X 2 AA tandem repeats of A-P. The OmpA-like domain maps to 116–243 (VQTKHFTLKS…RRVEIEVKGI (128 aa)). Residues Cys-217 and Cys-229 are joined by a disulfide bond.

Belongs to the outer membrane OOP (TC 1.B.6) superfamily. OmpA family. In terms of assembly, monomer and homodimer.

The protein localises to the cell outer membrane. In terms of biological role, with TolR probably plays a role in maintaining the position of the peptidoglycan cell wall in the periplasm. Acts as a porin with low permeability that allows slow penetration of small solutes; an internal gate slows down solute passage. This Atlantibacter hermannii (Escherichia hermannii) protein is Outer membrane protein A.